A 543-amino-acid chain; its full sequence is CTP synthase (543 aa).

Positions 1–265 (MTNYIFVTGG…DELVVQRFGL (265 aa)) are amidoligase domain. Serine 13 contacts CTP. Serine 13 contacts UTP. ATP contacts are provided by residues 14–19 (SLGKGI) and aspartate 71. Residues aspartate 71 and glutamate 139 each coordinate Mg(2+). CTP is bound by residues 146 to 148 (DIE), 186 to 191 (KTKPTQ), and lysine 222. Residues 186-191 (KTKPTQ) and lysine 222 contribute to the UTP site. 238-240 (KDA) contributes to the ATP binding site. In terms of domain architecture, Glutamine amidotransferase type-1 spans 290–541 (TIGMVGKYVE…VKAAGEYYKN (252 aa)). Glycine 351 lines the L-glutamine pocket. Catalysis depends on cysteine 378, which acts as the Nucleophile; for glutamine hydrolysis. Residues 379–382 (LGMQ), glutamate 402, and arginine 469 each bind L-glutamine. Residues histidine 514 and glutamate 516 contribute to the active site.

Belongs to the CTP synthase family. In terms of assembly, homotetramer.

It catalyses the reaction UTP + L-glutamine + ATP + H2O = CTP + L-glutamate + ADP + phosphate + 2 H(+). The catalysed reaction is L-glutamine + H2O = L-glutamate + NH4(+). The enzyme catalyses UTP + NH4(+) + ATP = CTP + ADP + phosphate + 2 H(+). It functions in the pathway pyrimidine metabolism; CTP biosynthesis via de novo pathway; CTP from UDP: step 2/2. Allosterically activated by GTP, when glutamine is the substrate; GTP has no effect on the reaction when ammonia is the substrate. The allosteric effector GTP functions by stabilizing the protein conformation that binds the tetrahedral intermediate(s) formed during glutamine hydrolysis. Inhibited by the product CTP, via allosteric rather than competitive inhibition. Its function is as follows. Catalyzes the ATP-dependent amination of UTP to CTP with either L-glutamine or ammonia as the source of nitrogen. Regulates intracellular CTP levels through interactions with the four ribonucleotide triphosphates. This chain is CTP synthase, found in Pseudoalteromonas atlantica (strain T6c / ATCC BAA-1087).